The following is a 1105-amino-acid chain: MNSDDDSVFNDDLNDSEITNLIHNIPSSSSSCSSSKNKLQRNLYGEIIPEQYVEIDSSKGYTELPPTHHALNYENLSSYIYPTNFEVRDYQFNIVQRAFYDNLLVALPTGLGKTFIASTVMLNFTRWFPRGKIIFMAPTKPLVAQQIKACCGITGIPTSEVAILLDKSRRNRADIWDSKTVFFTTPQVVENDLTAGIIDPKEVVLLVIDEAHKSKGNYAYNNVVKFITRFNISFRILALTATPASDVEGVQEIIDNLSISKVEVRTEQSIDITKYMKQKKIERVTVSPSVEICELVDMLCTAIQPVLSMANERRIYDMSDPSKINAFQVIDASQRLLKNPTIPEGLKWQNYFILQILNVVGQALRRLNIYGIKSFYNYFDQKHKEFTIKFKNKKSNNQTAARFYFHDNIKLILDKCKELIADDNFLGHPKLEILINELDEFFKENEANDSRVIIFTEFRESALDIVSSIERIGSNLRPHIFIGQSKEKEKFDEEAYLSKGKKGRTKGKATKGKQNSETPERSTSRTSSEDAQIKGMNQKLQKDLIKKFKKGEYNILVATSIGEEGLDIGEVDLIVCYDSTSSPIKNIQRMGRTGRKRDGKVLLLFAGNEESKFDKAMAGYEFIQQHIMNGRLITLAQSNRIIPKSYKPIVEKKFIEIPEENTEIKAEEDEDEIIRIATSYMNNKGKKVTKSKSKSKSNSKSKKIEKRFFMPDNVTTGFQNVTSMVRKADSDKSVADKRREKDLLDKLLDSDTEDELLIQSKKSPVKENQSKRPNSEHICEEDSRQETENNSNESNGSFENENDQNKESGVSYPLSYRQTPPKLGIRRLSPQVSMNINLDAPVATEEAAPLVTGKSTSPPENVAEKRNSPILNSSNRECAPKQKTLGLKRRKANSITDQLKRHYSRVIKPNTAYRTITVSDDEKSVEDSINNQQLHKNKNLGSTSDDDDAFDEGDVFDDGMDDELALIANDKLSSFERSLSPNLPAQNNASDEVYKHEFSPGEGVLNQEQMLELYTSYFSLLDPADRVDFYDPLNFNQKPNTSINHRGRIGHSQVSRRLLQSSKFIGSVSTTTAKNIVKRYAQTYNTTNHQHNMHIVQEITNSSSK.

The region spanning 94–261 is the Helicase ATP-binding domain; it reads IVQRAFYDNL…EIIDNLSISK (168 aa). 107–114 lines the ATP pocket; the sequence is LPTGLGKT. A DEAH box motif is present at residues 209–212; the sequence is DEAH. The Helicase C-terminal domain maps to 468 to 641; that stretch reads SIERIGSNLR…LITLAQSNRI (174 aa). Disordered regions lie at residues 493–534, 684–708, 758–824, 850–880, and 918–953; these read EEAY…AQIK, KGKK…EKRF, IQSK…PKLG, LVTG…ECAP, and VSDD…FDEG. Residues 499–511 show a composition bias toward basic residues; that stretch reads KGKKGRTKGKATK. Basic and acidic residues predominate over residues 518 to 532; sequence TPERSTSRTSSEDAQ. A compositionally biased stretch (basic residues) spans 684–705; that stretch reads KGKKVTKSKSKSKSNSKSKKIE. Positions 764–787 are enriched in basic and acidic residues; sequence PVKENQSKRPNSEHICEEDSRQET. Low complexity predominate over residues 788–799; it reads ENNSNESNGSFE. Residues 927-943 are compositionally biased toward polar residues; that stretch reads DSINNQQLHKNKNLGST. Acidic residues predominate over residues 944 to 953; sequence SDDDDAFDEG.

The protein belongs to the DEAD box helicase family. DEAH subfamily. FANCM sub-subfamily. As to quaternary structure, interacts with the MHF histone-fold complex to form the FANCM-MHF complex.

Its subcellular location is the nucleus. It catalyses the reaction ATP + H2O = ADP + phosphate + H(+). In terms of biological role, ATP-dependent DNA helicase involved in DNA damage repair by homologous recombination and in genome maintenance. Capable of unwinding D-loops. Plays a role in limiting crossover recombinants during mitotic DNA double-strand break (DSB) repair. Component of a FANCM-MHF complex which promotes gene conversion at blocked replication forks, probably by reversal of the stalled fork. The polypeptide is ATP-dependent DNA helicase MPH1 (Debaryomyces hansenii (strain ATCC 36239 / CBS 767 / BCRC 21394 / JCM 1990 / NBRC 0083 / IGC 2968) (Yeast)).